The following is a 100-amino-acid chain: Urease subunit gamma (100 aa).

It belongs to the urease gamma subunit family. In terms of assembly, heterotrimer of UreA (gamma), UreB (beta) and UreC (alpha) subunits. Three heterotrimers associate to form the active enzyme.

Its subcellular location is the cytoplasm. It catalyses the reaction urea + 2 H2O + H(+) = hydrogencarbonate + 2 NH4(+). Its pathway is nitrogen metabolism; urea degradation; CO(2) and NH(3) from urea (urease route): step 1/1. The polypeptide is Urease subunit gamma (Azotobacter vinelandii (strain DJ / ATCC BAA-1303)).